The following is a 202-amino-acid chain: ER membrane protein complex subunit 7 homolog (202 aa).

A signal peptide spans 1–23; the sequence is MAPIFRSTSLIAFSLFFFFFAST. The helical transmembrane segment at 148–168 threads the bilayer; sequence IVKSPMGLMVGFMVVVVFLMP. A disordered region spans residues 179-202; the sequence is MKSAQEQMRSQGVPSLTSLLPASR. Polar residues predominate over residues 182 to 202; sequence AQEQMRSQGVPSLTSLLPASR.

This sequence belongs to the EMC7 family.

Its subcellular location is the membrane. This is ER membrane protein complex subunit 7 homolog from Arabidopsis thaliana (Mouse-ear cress).